The primary structure comprises 223 residues: ATP synthase subunit a 1 (223 aa).

Helical transmembrane passes span 20–40 (QTIVMTWVIMVFLAGGSAFLT), 78–98 (YLSYLATLFLFVATAVLFTII), 107–127 (SLSTTAALALSVFVAVPLYGI), 173–193 (VMIIGILLGIAPLFFPVLMSV), and 194–214 (LGLLTGMVQAYIFSMLATVYI).

The protein belongs to the ATPase A chain family. F-type ATPases have 2 components, CF(1) - the catalytic core - and CF(0) - the membrane proton channel. CF(1) has five subunits: alpha(3), beta(3), gamma(1), delta(1), epsilon(1). CF(0) has four main subunits: a, b, b' and c.

It localises to the cell inner membrane. In terms of biological role, key component of the proton channel; it plays a direct role in the translocation of protons across the membrane. The polypeptide is ATP synthase subunit a 1 (Prosthecochloris aestuarii (strain DSM 271 / SK 413)).